A 118-amino-acid polypeptide reads, in one-letter code: MIVGHGIDLQEISAIEKVYQRNPRFAQKILTEQELAIFESFPYKRRLSYLAGRWSGKEAFAKAIGTGIGRLTFQDIEILNDVRGCPILTKSPFKGNSFISISHSGNYVQASVILEDKK.

Aspartate 8 and glutamate 58 together coordinate Mg(2+).

The protein belongs to the P-Pant transferase superfamily. AcpS family. It depends on Mg(2+) as a cofactor.

Its subcellular location is the cytoplasm. The catalysed reaction is apo-[ACP] + CoA = holo-[ACP] + adenosine 3',5'-bisphosphate + H(+). In terms of biological role, transfers the 4'-phosphopantetheine moiety from coenzyme A to a Ser of acyl-carrier-protein. This Streptococcus pyogenes serotype M5 (strain Manfredo) protein is Holo-[acyl-carrier-protein] synthase.